The primary structure comprises 159 residues: 2-C-methyl-D-erythritol 2,4-cyclodiphosphate synthase (159 aa).

A divalent metal cation contacts are provided by aspartate 8 and histidine 10. 4-CDP-2-C-methyl-D-erythritol 2-phosphate is bound by residues 8 to 10 (DVH) and 34 to 35 (HS). An a divalent metal cation-binding site is contributed by histidine 42. Residues 56-58 (DIG), 61-65 (FPDTD), 100-106 (AQAPKML), 132-135 (TTTE), phenylalanine 139, and arginine 142 each bind 4-CDP-2-C-methyl-D-erythritol 2-phosphate.

Belongs to the IspF family. In terms of assembly, homotrimer. Requires a divalent metal cation as cofactor.

The catalysed reaction is 4-CDP-2-C-methyl-D-erythritol 2-phosphate = 2-C-methyl-D-erythritol 2,4-cyclic diphosphate + CMP. It functions in the pathway isoprenoid biosynthesis; isopentenyl diphosphate biosynthesis via DXP pathway; isopentenyl diphosphate from 1-deoxy-D-xylulose 5-phosphate: step 4/6. In terms of biological role, involved in the biosynthesis of isopentenyl diphosphate (IPP) and dimethylallyl diphosphate (DMAPP), two major building blocks of isoprenoid compounds. Catalyzes the conversion of 4-diphosphocytidyl-2-C-methyl-D-erythritol 2-phosphate (CDP-ME2P) to 2-C-methyl-D-erythritol 2,4-cyclodiphosphate (ME-CPP) with a corresponding release of cytidine 5-monophosphate (CMP). This Salmonella choleraesuis (strain SC-B67) protein is 2-C-methyl-D-erythritol 2,4-cyclodiphosphate synthase.